The chain runs to 294 residues: N-acetylmuramic acid 6-phosphate etherase (294 aa).

One can recognise an SIS domain in the interval 56–219 (TSYSLRNGGR…STLSMVSVGK (164 aa)). Residue E84 is the Proton donor of the active site. The active site involves E115.

The protein belongs to the GCKR-like family. MurNAc-6-P etherase subfamily. In terms of assembly, homodimer.

It carries out the reaction N-acetyl-D-muramate 6-phosphate + H2O = N-acetyl-D-glucosamine 6-phosphate + (R)-lactate. Its pathway is amino-sugar metabolism; 1,6-anhydro-N-acetylmuramate degradation. It functions in the pathway amino-sugar metabolism; N-acetylmuramate degradation. It participates in cell wall biogenesis; peptidoglycan recycling. Specifically catalyzes the cleavage of the D-lactyl ether substituent of MurNAc 6-phosphate, producing GlcNAc 6-phosphate and D-lactate. Together with AnmK, is also required for the utilization of anhydro-N-acetylmuramic acid (anhMurNAc) either imported from the medium or derived from its own cell wall murein, and thus plays a role in cell wall recycling. The sequence is that of N-acetylmuramic acid 6-phosphate etherase from Francisella tularensis subsp. holarctica (strain LVS).